The chain runs to 252 residues: 5-oxoprolinase subunit A 1 (252 aa).

Belongs to the LamB/PxpA family. In terms of assembly, forms a complex composed of PxpA, PxpB and PxpC.

The catalysed reaction is 5-oxo-L-proline + ATP + 2 H2O = L-glutamate + ADP + phosphate + H(+). Its function is as follows. Catalyzes the cleavage of 5-oxoproline to form L-glutamate coupled to the hydrolysis of ATP to ADP and inorganic phosphate. This is 5-oxoprolinase subunit A 1 from Pseudomonas putida (strain ATCC 47054 / DSM 6125 / CFBP 8728 / NCIMB 11950 / KT2440).